The chain runs to 337 residues: Hairy/enhancer-of-split related with YRPW motif protein 2 (337 aa).

The disordered stretch occupies residues 1–52 (MKRPCEETTSESDMDETIDVGSENNYSGQSTSSVIRLNSPTTTSQIMARKKR). The span at 8–18 (TTSESDMDETI) shows a compositional bias: acidic residues. Residues 22-46 (SENNYSGQSTSSVIRLNSPTTTSQI) are compositionally biased toward polar residues. Residues 47 to 116 (MARKKRRGII…GGKGYFDAHA (70 aa)) are transcriptional repression and interaction with NCOR1 and SIN3A. In terms of domain architecture, bHLH spans 48 to 103 (ARKKRRGIIEKRRRDRINNSLSELRRLVPTAFEKQGSAKLEKAEILQMTVDHLKML). The Orange domain occupies 122-157 (MSIGFRECLTEVARYLSSVEGLDSSDPLRVRLVSHL). Residues 307–325 (LSVSATSSPQQTSSGTNNK) show a composition bias toward polar residues. Residues 307-337 (LSVSATSSPQQTSSGTNNKPYRPWGTEVGAF) form a disordered region. Residues 327-330 (YRPW) carry the YRPW motif motif.

It belongs to the HEY family. May self-associate. Interacts with GATA4, HES1 and HEYL. Interacts with HDAC1, NCOR1 and SIN3A. Interacts with ARNT and GATA6.

The protein localises to the nucleus. Functionally, downstream effector of Notch signaling which may be required for cardiovascular development. Transcriptional repressor which binds preferentially to the canonical E box sequence 5'-CACGTG-3'. Represses transcription by the cardiac transcriptional activators GATA4 and GATA6. The polypeptide is Hairy/enhancer-of-split related with YRPW motif protein 2 (HEY2) (Homo sapiens (Human)).